The primary structure comprises 141 residues: Cholinesterase (141 aa).

An N-linked (GlcNAc...) asparagine glycan is attached at Asn39. Residue 49-50 participates in substrate binding; sequence GG. Ser131 serves as the catalytic Acyl-ester intermediate. Position 131 is a phosphoserine (Ser131).

It belongs to the type-B carboxylesterase/lipase family. In terms of assembly, homotetramer; disulfide-linked. Dimer of dimers. Present in most cells except erythrocytes.

It localises to the secreted. It catalyses the reaction an acylcholine + H2O = a carboxylate + choline + H(+). Its function is as follows. Esterase with broad substrate specificity. Contributes to the inactivation of the neurotransmitter acetylcholine. Can degrade neurotoxic organophosphate esters. The polypeptide is Cholinesterase (BCHE) (Sus scrofa (Pig)).